We begin with the raw amino-acid sequence, 87 residues long: UPF0235 protein TGRD_618 (87 aa).

It belongs to the UPF0235 family.

The sequence is that of UPF0235 protein TGRD_618 from Endomicrobium trichonymphae.